Here is a 320-residue protein sequence, read N- to C-terminus: Acetyl-coenzyme A carboxylase carboxyl transferase subunit beta (320 aa).

In terms of domain architecture, CoA carboxyltransferase N-terminal spans 25–294; sequence VWTKCDSCGQ…AKDEDELLGE (270 aa). Zn(2+) is bound by residues Cys-29, Cys-32, Cys-48, and Cys-51. A C4-type zinc finger spans residues 29-51; sequence CDSCGQVLYRAELERNLEVCPKC. Acidic residues predominate over residues 295-310; that stretch reads EMIADDIESSDNEPEI. The disordered stretch occupies residues 295-320; sequence EMIADDIESSDNEPEINIETNKKEDV.

Belongs to the AccD/PCCB family. Acetyl-CoA carboxylase is a heterohexamer composed of biotin carboxyl carrier protein (AccB), biotin carboxylase (AccC) and two subunits each of ACCase subunit alpha (AccA) and ACCase subunit beta (AccD). The cofactor is Zn(2+).

The protein localises to the cytoplasm. It catalyses the reaction N(6)-carboxybiotinyl-L-lysyl-[protein] + acetyl-CoA = N(6)-biotinyl-L-lysyl-[protein] + malonyl-CoA. Its pathway is lipid metabolism; malonyl-CoA biosynthesis; malonyl-CoA from acetyl-CoA: step 1/1. Functionally, component of the acetyl coenzyme A carboxylase (ACC) complex. Biotin carboxylase (BC) catalyzes the carboxylation of biotin on its carrier protein (BCCP) and then the CO(2) group is transferred by the transcarboxylase to acetyl-CoA to form malonyl-CoA. The protein is Acetyl-coenzyme A carboxylase carboxyl transferase subunit beta of Proteus mirabilis (strain HI4320).